The sequence spans 496 residues: Cobyric acid synthase (496 aa).

Residues 250-437 form the GATase cobBQ-type domain; sequence TLKVIAPALP…LHGLFESPQA (188 aa). Cys-331 serves as the catalytic Nucleophile. His-429 is an active-site residue.

The protein belongs to the CobB/CobQ family. CobQ subfamily.

Its pathway is cofactor biosynthesis; adenosylcobalamin biosynthesis. In terms of biological role, catalyzes amidations at positions B, D, E, and G on adenosylcobyrinic A,C-diamide. NH(2) groups are provided by glutamine, and one molecule of ATP is hydrogenolyzed for each amidation. The polypeptide is Cobyric acid synthase (Hahella chejuensis (strain KCTC 2396)).